Here is a 356-residue protein sequence, read N- to C-terminus: Butyrate kinase (356 aa).

This sequence belongs to the acetokinase family.

The protein localises to the cytoplasm. It catalyses the reaction butanoate + ATP = butanoyl phosphate + ADP. It participates in lipid metabolism; butanoate metabolism. Functionally, catalyzes the conversion of butyryl-CoA through butyryl phosphate to butyrate. The polypeptide is Butyrate kinase (buk) (Clostridium perfringens (strain 13 / Type A)).